Reading from the N-terminus, the 777-residue chain is E3 UFM1-protein ligase 1 homolog (777 aa).

Residues 396 to 417 (MKHQDPMDRDSAVGEGKADKRE) are compositionally biased toward basic and acidic residues. Residues 396-470 (MKHQDPMDRD…PSGGKKGGKD (75 aa)) form a disordered region.

This sequence belongs to the UFL1 family.

Its function is as follows. E3 UFM1-protein ligase that mediates ufmylation of target proteins. The chain is E3 UFM1-protein ligase 1 homolog from Aedes aegypti (Yellowfever mosquito).